We begin with the raw amino-acid sequence, 226 residues long: Arpin (226 aa).

Residues Glu211–Asp226 form a necessary and sufficient for interaction with ARPC2 region.

Belongs to the Arpin family. Associates with the Arp2/3 complex. Interacts with ARPC2; enhanced by activated RAC1. Interacts with ARPC5; the interaction is dependent on RAC1.

It is found in the cell projection. The protein resides in the lamellipodium. In terms of biological role, regulates actin polymerization by inhibiting the actin-nucleating activity of the Arp2/3 complex; the function is competitive with nucleation promoting factors. Participates in an incoherent feedforward loop at the lamellipodium tip where it inhibits the ARP2/2 complex in response to Rac signaling and where Rac also stimulates actin polymerization through the WAVE complex. Involved in steering cell migration by controlling its directional persistence. This Homo sapiens (Human) protein is Arpin (ARPIN).